We begin with the raw amino-acid sequence, 153 residues long: ATP synthase subunit b' (153 aa).

The helical transmembrane segment at 23–40 threads the bilayer; sequence LMAIQVVALTYILNSLFF.

The protein belongs to the ATPase B chain family. In terms of assembly, F-type ATPases have 2 components, F(1) - the catalytic core - and F(0) - the membrane proton channel. F(1) has five subunits: alpha(3), beta(3), gamma(1), delta(1), epsilon(1). F(0) has four main subunits: a(1), b(1), b'(1) and c(10-14). The alpha and beta chains form an alternating ring which encloses part of the gamma chain. F(1) is attached to F(0) by a central stalk formed by the gamma and epsilon chains, while a peripheral stalk is formed by the delta, b and b' chains.

Its subcellular location is the cellular thylakoid membrane. Its function is as follows. F(1)F(0) ATP synthase produces ATP from ADP in the presence of a proton or sodium gradient. F-type ATPases consist of two structural domains, F(1) containing the extramembraneous catalytic core and F(0) containing the membrane proton channel, linked together by a central stalk and a peripheral stalk. During catalysis, ATP synthesis in the catalytic domain of F(1) is coupled via a rotary mechanism of the central stalk subunits to proton translocation. Functionally, component of the F(0) channel, it forms part of the peripheral stalk, linking F(1) to F(0). The b'-subunit is a diverged and duplicated form of b found in plants and photosynthetic bacteria. This Prochlorococcus marinus (strain MIT 9215) protein is ATP synthase subunit b'.